Here is a 276-residue protein sequence, read N- to C-terminus: uncharacterized protein (276 aa).

The region spanning 20-137 (PVLIFIPGAN…PPINTFLPDS (118 aa)) is the AB hydrolase-1 domain. The interval 57 to 76 (GESELTEPLPDSASNPDSDY) is disordered.

It belongs to the AB hydrolase superfamily.

This is an uncharacterized protein from Staphylococcus aureus (strain COL).